The sequence spans 154 residues: Protein X (154 aa).

The segment at 68–117 (PCALRFTSARCMETTVNAHQILPKVLHKRTLGLPAMSTTDLEAYFKDCVF) is mitochondrial targeting sequence.

This sequence belongs to the orthohepadnavirus protein X family. As to quaternary structure, may form homodimer. May interact with host CEBPA, CFLAR, CREB1, DDB1, E4F1, HBXIP, HSPD1/HSP60, NFKBIA, POLR2E and SMAD4. Interacts with host SMC5-SMC6 complex and induces its degradation. Interacts with host TRPC4AP; leading to prevent ubiquitination of TRPC4AP. Interacts with host PLSCR1; this interaction promotes ubiquitination and degradation of HBx and impairs HBx-mediated cell proliferation. Post-translationally, a fraction may be phosphorylated in insect cells and HepG2 cells, a human hepatoblastoma cell line. Phosphorylated in vitro by host protein kinase C or mitogen-activated protein kinase. N-acetylated in insect cells.

It is found in the host cytoplasm. It localises to the host nucleus. The protein localises to the host mitochondrion. Multifunctional protein that plays a role in silencing host antiviral defenses and promoting viral transcription. Does not seem to be essential for HBV infection. May be directly involved in development of cirrhosis and liver cancer (hepatocellular carcinoma). Most of cytosolic activities involve modulation of cytosolic calcium. The effect on apoptosis is controversial depending on the cell types in which the studies have been conducted. May induce apoptosis by localizing in mitochondria and causing loss of mitochondrial membrane potential. May also modulate apoptosis by binding host CFLAR, a key regulator of the death-inducing signaling complex (DISC). Promotes viral transcription by using the host E3 ubiquitin ligase DDB1 to target the SMC5-SMC6 complex to proteasomal degradation. This host complex would otherwise bind to viral episomal DNA, and prevents its transcription. Moderately stimulates transcription of many different viral and cellular transcription elements. Promoters and enhancers stimulated by HBx contain DNA binding sites for NF-kappa-B, AP-1, AP-2, c-EBP, ATF/CREB, or the calcium-activated factor NF-AT. The polypeptide is Protein X (Hepatitis B virus genotype A2 subtype adw2 (strain Rutter 1979) (HBV-A)).